The chain runs to 228 residues: 2,3-bisphosphoglycerate-dependent phosphoglycerate mutase (228 aa).

Substrate is bound by residues 8–15, 21–22, arginine 60, 87–90, lysine 98, 114–115, and 180–181; these read RHGQSEWN, TG, ERHY, RR, and GN. The active-site Tele-phosphohistidine intermediate is histidine 9. The Proton donor/acceptor role is filled by glutamate 87.

The protein belongs to the phosphoglycerate mutase family. BPG-dependent PGAM subfamily. As to quaternary structure, homodimer.

The enzyme catalyses (2R)-2-phosphoglycerate = (2R)-3-phosphoglycerate. The protein operates within carbohydrate degradation; glycolysis; pyruvate from D-glyceraldehyde 3-phosphate: step 3/5. In terms of biological role, catalyzes the interconversion of 2-phosphoglycerate and 3-phosphoglycerate. The chain is 2,3-bisphosphoglycerate-dependent phosphoglycerate mutase from Zymomonas mobilis subsp. mobilis (strain ATCC 31821 / ZM4 / CP4).